The sequence spans 1161 residues: Voltage-gated inwardly rectifying potassium channel KCNH2 (1161 aa).

Residues 1-405 are Cytoplasmic-facing; the sequence is MPVRRGHVAP…RIHRWTILHY (405 aa). Residues 17–88 form the PAS domain; that stretch reads TIIRKFEGQS…AAQIAQALLG (72 aa). Residues 92–144 form the PAC domain; it reads RKVEIAFYRKDGSCFLCLVDVVPVKNEDGAVIMFILNFEVVMEKDMVGSPARD. Residues 233–286 are disordered; it reads ALVGSCSPPPPVSAPGPHPSLRAHSLNPDASGSSCSLARTRSRESCASVRRASS. A phosphoserine mark is found at Ser239 and Ser245. Residues 239–250 are compositionally biased toward pro residues; sequence SPPPPVSAPGPH. Positions 260–271 are enriched in polar residues; sequence PDASGSSCSLAR. Phosphoserine is present on residues Ser285, Ser286, Ser322, and Ser353. A helical transmembrane segment spans residues 406–426; sequence SPFKAVWDWLILLLVIYTAVF. At 427 to 452 the chain is on the extracellular side; the sequence is TPYSAAFLLKETEEGPPAPECGYACQ. The chain crosses the membrane as a helical span at residues 453-473; the sequence is PLAVVDLIVDIMFIVDILINF. The Cytoplasmic portion of the chain corresponds to 474–497; that stretch reads RTTYVNANEEVVSHPGRIAVHYFK. Residues 498-518 traverse the membrane as a helical segment; that stretch reads GWFLIDMVAAIPFDLLIFGSG. Residues 519-522 are Extracellular-facing; the sequence is SEEL. Residues 523–543 traverse the membrane as a helical; Voltage-sensor segment; sequence IGLLKTARLLRLVRVARKLDR. The Cytoplasmic portion of the chain corresponds to 544–549; it reads YSEYGA. Residues 550–570 form a helical membrane-spanning segment; sequence AVLLLLMCTFALIAHWLACIW. At 571 to 613 the chain is on the extracellular side; that stretch reads YAIGNMEQPHMDSRIGWLHNLGDQMGKPYNSSGLGGPSIKDKY. Asn600 is a glycosylation site (N-linked (GlcNAc...) asparagine). Residues 614-634 constitute an intramembrane region (pore-forming); sequence VTGLYFTFSSLTSVGFGNVSP. A Selectivity filter motif is present at residues 626–631; that stretch reads SVGFGN. Over 635–640 the chain is Extracellular; the sequence is NTNSEK. The helical transmembrane segment at 641–661 threads the bilayer; that stretch reads IFSICVMLIGSLMYASIFGNV. Over 662 to 1161 the chain is Cytoplasmic; the sequence is SAIIQRLYSG…LHRHGSDPGS (500 aa). A cNMP-binding domain region spans residues 744-844; sequence PFRGATKDCL…IHRDDLLEVL (101 aa). Residues 872–985 form a disordered region; the sequence is GSPGSTEWEG…TEDCEKSSDT (114 aa). Residues Ser873 and Ser876 each carry the phosphoserine modification. Positions 885-894 are enriched in basic residues; that stretch reads RQRKRKLSFR. The span at 930–941 shows a compositional bias: low complexity; sequence GESPSSGPSSPE. Pro residues predominate over residues 962 to 972; that stretch reads SPRPPGEPPGG. Omega-N-methylarginine is present on Arg1016. A coiled-coil region spans residues 1037-1064; sequence RGDVESRLDALQRQLNRLETRLSADMAT. The disordered stretch occupies residues 1121-1161; sequence ELPPGAPELPQEGPTRRLSLPGQLGALTSQPLHRHGSDPGS. The residue at position 1139 (Ser1139) is a Phosphoserine.

This sequence belongs to the potassium channel family. H (Eag) (TC 1.A.1.20) subfamily. Kv11.1/KCNH2 sub-subfamily. The potassium channel is probably composed of a homo- or heterotetrameric complex of pore-forming alpha subunits that can associate with modulating beta subunits. Interacts with DNAJB12 and DNAJB14; chaperones DNAJB12 and DNAJB14 promote tetramerization. Heteromultimer with KCNH6/ERG2 and KCNH7/ERG3. Interacts with ALG10B. Forms a stable complex with KCNE1 or KCNE2, and that this heteromultimerization regulates Inward rectifier potassium channel activity. Interacts with CANX. The core-glycosylated, but not the fully glycosylated form interacts with RNF207. Interacts with NDFIP1 and NDFIP2; this interaction decreases the cell membrane expression by targeting KCNH2, through interaction with NEDD4L, for the degradation through the multivesicular bodies (MVBs)-lysosomal pathway. Post-translationally, phosphorylated on serine and threonine residues. Phosphorylation by PKA inhibits ion conduction. As to expression, detected in heart, both in atrium and in left ventricle.

The protein localises to the cell membrane. The catalysed reaction is K(+)(in) = K(+)(out). Pore-forming (alpha) subunit of voltage-gated inwardly rectifying potassium channel. Characterized by unusual gating kinetics by producing relatively small outward currents during membrane depolarization and large inward currents during subsequent repolarization which reflect a rapid inactivation during depolarization and quick recovery from inactivation but slow deactivation (closing) during repolarization. Channel properties are modulated by cAMP and subunit assembly. Forms a stable complex with KCNE1 or KCNE2, and that this heteromultimerization regulates inward rectifier potassium channel activity. This Oryctolagus cuniculus (Rabbit) protein is Voltage-gated inwardly rectifying potassium channel KCNH2.